Reading from the N-terminus, the 644-residue chain is Type III restriction-modification enzyme EcoP15I Mod subunit (644 aa).

The tract at residues 123 to 126 is binding of S-adenosyl methionine; it reads DPPY.

It belongs to the N(4)/N(6)-methyltransferase family. Forms a homodimer capable of methylating the target sequence in the absence of Res. A heterotetramer with stoichiometry Res(2)Mod(2). A heterotrimer with stoichiometry Res(1)Mod(2).

The catalysed reaction is a 2'-deoxyadenosine in DNA + S-adenosyl-L-methionine = an N(6)-methyl-2'-deoxyadenosine in DNA + S-adenosyl-L-homocysteine + H(+). A beta subtype methylase that binds the system-specific DNA recognition site 5'-CAGCAG-3' and methylates A-5 (of only 1 strand as the other does not have an A residue). DNA restriction requires both the Res and Mod subunits. The A-5 nucleotide flips into the catalytic pocket of one Mod subunit for modification, while the other Mod subunit makes most of the DNA sequence-specific contacts. The chain is Type III restriction-modification enzyme EcoP15I Mod subunit from Escherichia coli.